Consider the following 293-residue polypeptide: Probable endoribonuclease YicC (293 aa).

This sequence belongs to the YicC/YloC family. A divalent metal cation serves as cofactor.

Its function is as follows. Negatively modulates sporulation, probably in response to nutrient conditions. Effects expression of sporulation regulator spo0A in an indirect manner, possibly via repression of the sinRR' operon. In terms of biological role, probably a ssRNA endonuclease. Might contribute to small RNA (sRNA) regulation. This is Probable endoribonuclease YicC from Clostridioides difficile (strain 630) (Peptoclostridium difficile).